The sequence spans 260 residues: Ribonuclease HII (260 aa).

In terms of domain architecture, RNase H type-2 spans 70–260 (QAIAGIDEVG…PIKSMLKEKN (191 aa)). Residues D76, E77, and D171 each coordinate a divalent metal cation.

The protein belongs to the RNase HII family. It depends on Mn(2+) as a cofactor. Mg(2+) is required as a cofactor.

The protein localises to the cytoplasm. The catalysed reaction is Endonucleolytic cleavage to 5'-phosphomonoester.. Functionally, endonuclease that specifically degrades the RNA of RNA-DNA hybrids. The protein is Ribonuclease HII of Streptococcus mutans serotype c (strain ATCC 700610 / UA159).